A 197-amino-acid polypeptide reads, in one-letter code: Pyridoxal 5'-phosphate synthase subunit PdxT (197 aa).

50–52 serves as a coordination point for L-glutamine; sequence GES. Cysteine 82 acts as the Nucleophile in catalysis. L-glutamine contacts are provided by residues arginine 111 and 140 to 141; that span reads IR. Active-site charge relay system residues include histidine 176 and glutamate 178.

It belongs to the glutaminase PdxT/SNO family. As to quaternary structure, in the presence of PdxS, forms a dodecamer of heterodimers. Only shows activity in the heterodimer.

It catalyses the reaction aldehydo-D-ribose 5-phosphate + D-glyceraldehyde 3-phosphate + L-glutamine = pyridoxal 5'-phosphate + L-glutamate + phosphate + 3 H2O + H(+). The enzyme catalyses L-glutamine + H2O = L-glutamate + NH4(+). It functions in the pathway cofactor biosynthesis; pyridoxal 5'-phosphate biosynthesis. In terms of biological role, catalyzes the hydrolysis of glutamine to glutamate and ammonia as part of the biosynthesis of pyridoxal 5'-phosphate. The resulting ammonia molecule is channeled to the active site of PdxS. This Streptomyces griseus subsp. griseus (strain JCM 4626 / CBS 651.72 / NBRC 13350 / KCC S-0626 / ISP 5235) protein is Pyridoxal 5'-phosphate synthase subunit PdxT.